We begin with the raw amino-acid sequence, 466 residues long: Cysteine--tRNA ligase (466 aa).

Position 28 (Cys28) interacts with Zn(2+). The 'HIGH' region motif lies at 30–40; it reads PTVYNFFHIGN. Positions 208, 233, and 237 each coordinate Zn(2+). Positions 265 to 269 match the 'KMSKS' region motif; sequence KMSKS. ATP is bound at residue Lys268.

It belongs to the class-I aminoacyl-tRNA synthetase family. Monomer. Zn(2+) is required as a cofactor.

Its subcellular location is the cytoplasm. It carries out the reaction tRNA(Cys) + L-cysteine + ATP = L-cysteinyl-tRNA(Cys) + AMP + diphosphate. This is Cysteine--tRNA ligase from Clostridium perfringens (strain 13 / Type A).